The chain runs to 282 residues: Bifunctional protein FolD (282 aa).

Residues 166-168 (GAS) and Ile-232 each bind NADP(+).

It belongs to the tetrahydrofolate dehydrogenase/cyclohydrolase family. Homodimer.

It carries out the reaction (6R)-5,10-methylene-5,6,7,8-tetrahydrofolate + NADP(+) = (6R)-5,10-methenyltetrahydrofolate + NADPH. The catalysed reaction is (6R)-5,10-methenyltetrahydrofolate + H2O = (6R)-10-formyltetrahydrofolate + H(+). The protein operates within one-carbon metabolism; tetrahydrofolate interconversion. Its function is as follows. Catalyzes the oxidation of 5,10-methylenetetrahydrofolate to 5,10-methenyltetrahydrofolate and then the hydrolysis of 5,10-methenyltetrahydrofolate to 10-formyltetrahydrofolate. This chain is Bifunctional protein FolD, found in Haemophilus influenzae (strain PittGG).